A 366-amino-acid polypeptide reads, in one-letter code: Aminomethyltransferase (366 aa).

This sequence belongs to the GcvT family. In terms of assembly, the glycine cleavage system is composed of four proteins: P, T, L and H.

It carries out the reaction N(6)-[(R)-S(8)-aminomethyldihydrolipoyl]-L-lysyl-[protein] + (6S)-5,6,7,8-tetrahydrofolate = N(6)-[(R)-dihydrolipoyl]-L-lysyl-[protein] + (6R)-5,10-methylene-5,6,7,8-tetrahydrofolate + NH4(+). Its function is as follows. The glycine cleavage system catalyzes the degradation of glycine. In Thermosynechococcus vestitus (strain NIES-2133 / IAM M-273 / BP-1), this protein is Aminomethyltransferase.